Reading from the N-terminus, the 89-residue chain is Protein S100-A6 (89 aa).

EF-hand domains are found at residues 12–47 (LVAI…IGSK) and 48–83 (LQDA…LALI). Residues Thr-28 and Glu-33 each coordinate Ca(2+). An N6-acetyllysine modification is found at Lys-40. Ser-46 carries the phosphoserine modification. N6-acetyllysine; alternate is present on Lys-47. N6-succinyllysine; alternate is present on Lys-47. Ca(2+) contacts are provided by Asp-61, Asn-63, Asp-65, Glu-67, and Glu-72.

This sequence belongs to the S-100 family. In terms of assembly, homodimer; head to tail assembly of 2 subunits. Interacts with CACYBP in a calcium-dependent manner. Interacts with ANXA2 and ANXA11 (via N-terminus). Interacts with SUGT1. Interacts with TP53; has higher affinity for TP53 that is phosphorylated on its N-terminal domain, and lower affinity for TP53 that is phosphorylated on its C-terminal domain. Interacts with tropomyosin. Interacts with FKBP4. Interacts with PPP5C (via TPR repeats); the interaction is calcium-dependent and modulates PPP5C activity. Interacts with TPPP; this interaction inhibits TPPP dimerization.

The protein resides in the nucleus envelope. The protein localises to the cytoplasm. It is found in the cell membrane. May function as calcium sensor and modulator, contributing to cellular calcium signaling. May function by interacting with other proteins, such as TPR-containing proteins, and indirectly play a role in many physiological processes such as the reorganization of the actin cytoskeleton and in cell motility. Binds 2 calcium ions. Calcium binding is cooperative. The protein is Protein S100-A6 (S100a6) of Mus musculus (Mouse).